The following is a 319-amino-acid chain: Pantothenate kinase (319 aa).

Residue 96–103 (GSVAVGKS) coordinates ATP.

Belongs to the prokaryotic pantothenate kinase family.

It localises to the cytoplasm. It catalyses the reaction (R)-pantothenate + ATP = (R)-4'-phosphopantothenate + ADP + H(+). The protein operates within cofactor biosynthesis; coenzyme A biosynthesis; CoA from (R)-pantothenate: step 1/5. This Bacillus subtilis (strain 168) protein is Pantothenate kinase (coaA).